The following is a 354-amino-acid chain: S-adenosylmethionine:tRNA ribosyltransferase-isomerase (354 aa).

The protein belongs to the QueA family. In terms of assembly, monomer.

It localises to the cytoplasm. It catalyses the reaction 7-aminomethyl-7-carbaguanosine(34) in tRNA + S-adenosyl-L-methionine = epoxyqueuosine(34) in tRNA + adenine + L-methionine + 2 H(+). The protein operates within tRNA modification; tRNA-queuosine biosynthesis. Its function is as follows. Transfers and isomerizes the ribose moiety from AdoMet to the 7-aminomethyl group of 7-deazaguanine (preQ1-tRNA) to give epoxyqueuosine (oQ-tRNA). The chain is S-adenosylmethionine:tRNA ribosyltransferase-isomerase from Salmonella schwarzengrund (strain CVM19633).